The primary structure comprises 752 residues: Protein WEAK CHLOROPLAST MOVEMENT UNDER BLUE LIGHT-like 2 (752 aa).

A Phosphoserine modification is found at Ser143. 2 coiled-coil regions span residues 186–557 and 596–651; these read ERRK…SRAS and ELSK…KEAM. A disordered region spans residues 476–495; it reads KHDLSETRQRNREDTREEKC. The segment covering 653–675 has biased composition (basic and acidic residues); the sequence is KVEKARDGKVGMDHELRKWRSDN. Residues 653-733 are disordered; it reads KVEKARDGKV…ETETKKKKKR (81 aa). The span at 690 to 723 shows a compositional bias: polar residues; sequence KSKSALHQPTTFTFGEQASSSNVTPQASSSNVTP.

This sequence belongs to the WEB family.

The protein is Protein WEAK CHLOROPLAST MOVEMENT UNDER BLUE LIGHT-like 2 (WEL2) of Arabidopsis thaliana (Mouse-ear cress).